A 281-amino-acid chain; its full sequence is Bifunctional protein FolD (281 aa).

Residues 165 to 167 (GRG), threonine 192, and valine 233 each bind NADP(+).

It belongs to the tetrahydrofolate dehydrogenase/cyclohydrolase family. Homodimer.

The catalysed reaction is (6R)-5,10-methylene-5,6,7,8-tetrahydrofolate + NADP(+) = (6R)-5,10-methenyltetrahydrofolate + NADPH. It catalyses the reaction (6R)-5,10-methenyltetrahydrofolate + H2O = (6R)-10-formyltetrahydrofolate + H(+). It participates in one-carbon metabolism; tetrahydrofolate interconversion. Catalyzes the oxidation of 5,10-methylenetetrahydrofolate to 5,10-methenyltetrahydrofolate and then the hydrolysis of 5,10-methenyltetrahydrofolate to 10-formyltetrahydrofolate. The chain is Bifunctional protein FolD from Mycobacterium bovis (strain BCG / Tokyo 172 / ATCC 35737 / TMC 1019).